The sequence spans 240 residues: Ribonuclease P protein component 3 (240 aa).

This sequence belongs to the eukaryotic/archaeal RNase P protein component 3 family. In terms of assembly, consists of a catalytic RNA component and at least 4-5 protein subunits.

The protein resides in the cytoplasm. It carries out the reaction Endonucleolytic cleavage of RNA, removing 5'-extranucleotides from tRNA precursor.. In terms of biological role, part of ribonuclease P, a protein complex that generates mature tRNA molecules by cleaving their 5'-ends. This is Ribonuclease P protein component 3 from Halorubrum lacusprofundi (strain ATCC 49239 / DSM 5036 / JCM 8891 / ACAM 34).